The sequence spans 454 residues: Chaperone SurA (454 aa).

Positions 1-28 (MKISSFRKGRWLGALALFAVVCWSMADA) are cleaved as a signal peptide. 2 consecutive PpiC domains span residues 177-278 (DREY…KMLA) and 287-386 (LTKT…QVLE). The interval 431 to 454 (LDETPASPGEDAPAGEDSPETFMR) is disordered. Positions 443–454 (PAGEDSPETFMR) are enriched in acidic residues.

The protein resides in the periplasm. The enzyme catalyses [protein]-peptidylproline (omega=180) = [protein]-peptidylproline (omega=0). Its function is as follows. Chaperone involved in the correct folding and assembly of outer membrane proteins. Recognizes specific patterns of aromatic residues and the orientation of their side chains, which are found more frequently in integral outer membrane proteins. May act in both early periplasmic and late outer membrane-associated steps of protein maturation. This is Chaperone SurA from Methylococcus capsulatus (strain ATCC 33009 / NCIMB 11132 / Bath).